Here is an 89-residue protein sequence, read N- to C-terminus: Small ribosomal subunit protein uS14 (89 aa).

Belongs to the universal ribosomal protein uS14 family. As to quaternary structure, part of the 30S ribosomal subunit. Contacts proteins S3 and S10.

Binds 16S rRNA, required for the assembly of 30S particles and may also be responsible for determining the conformation of the 16S rRNA at the A site. The protein is Small ribosomal subunit protein uS14 of Chlorobium phaeovibrioides (strain DSM 265 / 1930) (Prosthecochloris vibrioformis (strain DSM 265)).